Consider the following 490-residue polypeptide: ATP synthase subunit beta, chloroplastic (490 aa).

170-177 (GGAGVGKT) contributes to the ATP binding site.

It belongs to the ATPase alpha/beta chains family. In terms of assembly, F-type ATPases have 2 components, CF(1) - the catalytic core - and CF(0) - the membrane proton channel. CF(1) has five subunits: alpha(3), beta(3), gamma(1), delta(1), epsilon(1). CF(0) has four main subunits: a(1), b(1), b'(1) and c(9-12).

It localises to the plastid. The protein localises to the chloroplast thylakoid membrane. The catalysed reaction is ATP + H2O + 4 H(+)(in) = ADP + phosphate + 5 H(+)(out). In terms of biological role, produces ATP from ADP in the presence of a proton gradient across the membrane. The catalytic sites are hosted primarily by the beta subunits. This Ipomoea setosa (Brazilian morning glory) protein is ATP synthase subunit beta, chloroplastic.